Reading from the N-terminus, the 177-residue chain is MSIVKSKIRTIPDYPKPGILFRDITSLLLDPEGLALTIGTFVNRYQGKGITKVAGIEARGFLTGAPLAFQLGVGFIPIRKKGKLPSETVSEEYDLEYGKDVIEVHKDSIQPGDKILLMDDLIATGGTMIAAVKLLKKLGAEIYEAGVIIDLPDLGGRKKLQEELKVPVFSICEFEGH.

It belongs to the purine/pyrimidine phosphoribosyltransferase family. In terms of assembly, homodimer.

It is found in the cytoplasm. It catalyses the reaction AMP + diphosphate = 5-phospho-alpha-D-ribose 1-diphosphate + adenine. It functions in the pathway purine metabolism; AMP biosynthesis via salvage pathway; AMP from adenine: step 1/1. Its function is as follows. Catalyzes a salvage reaction resulting in the formation of AMP, that is energically less costly than de novo synthesis. The protein is Adenine phosphoribosyltransferase of Leptospira interrogans serogroup Icterohaemorrhagiae serovar copenhageni (strain Fiocruz L1-130).